The following is a 731-amino-acid chain: Dynein axonemal intermediate chain 7 (731 aa).

Disordered stretches follow at residues 1–50 and 285–320; these read MPPK…NERL and QNTE…VRSE. 2 stretches are compositionally biased toward basic and acidic residues: residues 17 to 50 and 296 to 320; these read KAEK…NERL and GKME…VRSE.

This sequence belongs to the DNAI7 family. Part of the multisubunit axonemal dynein complex formed at least of two heavy chains and a number of intermediate and light chains.

Its subcellular location is the cell projection. It is found in the cilium. The protein resides in the cytoplasm. In terms of biological role, via its association with the multisubunit axonemal dynein complex, may be potentially involved in the regulation of cilia function. The polypeptide is Dynein axonemal intermediate chain 7 (dnai7) (Danio rerio (Zebrafish)).